The primary structure comprises 95 residues: Co-chaperonin GroES (95 aa).

The protein belongs to the GroES chaperonin family. As to quaternary structure, heptamer of 7 subunits arranged in a ring. Interacts with the chaperonin GroEL.

The protein localises to the cytoplasm. In terms of biological role, together with the chaperonin GroEL, plays an essential role in assisting protein folding. The GroEL-GroES system forms a nano-cage that allows encapsulation of the non-native substrate proteins and provides a physical environment optimized to promote and accelerate protein folding. GroES binds to the apical surface of the GroEL ring, thereby capping the opening of the GroEL channel. The chain is Co-chaperonin GroES from Rickettsia rickettsii (strain Sheila Smith).